The sequence spans 973 residues: E3 ubiquitin-protein ligase MIB2 (973 aa).

One can recognise an MIB/HERC2 1 domain in the interval 1–80 (MDLDPHAGVQ…AHDLLLYDNA (80 aa)). A ZZ-type zinc finger spans residues 86-138 (HPNIICDCCKKHGLRGMRWKCRVCFDYDLCTQCYMHNKHDLTHAFERYETSHS). Positions 91, 94, 106, 109, 115, 118, 124, and 128 each coordinate Zn(2+). Positions 149 to 227 (LPRIPLRGIF…KVDLRCVGEA (79 aa)) constitute an MIB/HERC2 2 domain. Serine 251 bears the Phosphoserine mark. ANK repeat units lie at residues 480–509 (QGRT…SMDL), 513–542 (EGNT…AVDA), 546–575 (TRST…DVNL), 579–611 (HADT…DVTA), 615–644 (QGFT…QLVD), 649–679 (DGFT…DVNV), 683–712 (KLQS…SVNT), 716–744 (EGDT…DPGP), and 785–814 (RGRS…ERQA). 2 consecutive RING-type zinc fingers follow at residues 850–885 (CLVC…IRCQ) and 929–962 (CPIC…PICR).

As to quaternary structure, interacts with actin monomer. Ubiquitinated. Possibly via autoubiquitination. In terms of tissue distribution, highly expressed in brain, heart, liver and kidney.

Its subcellular location is the cytoplasm. The protein localises to the endosome. It catalyses the reaction S-ubiquitinyl-[E2 ubiquitin-conjugating enzyme]-L-cysteine + [acceptor protein]-L-lysine = [E2 ubiquitin-conjugating enzyme]-L-cysteine + N(6)-ubiquitinyl-[acceptor protein]-L-lysine.. It functions in the pathway protein modification; protein ubiquitination. Functionally, E3 ubiquitin-protein ligase that mediates ubiquitination of Delta receptors, which act as ligands of Notch proteins. Positively regulates the Delta-mediated Notch signaling by ubiquitinating the intracellular domain of Delta, leading to endocytosis of Delta receptors. This Mus musculus (Mouse) protein is E3 ubiquitin-protein ligase MIB2 (Mib2).